A 268-amino-acid polypeptide reads, in one-letter code: Enoyl-[acyl-carrier-protein] reductase [NADH] (268 aa).

NAD(+) is bound by residues 20–21 (SI), 64–65 (DV), and 95–96 (IA). Tyr157 provides a ligand contact to substrate. Positions 164 and 193 each coordinate NAD(+).

It belongs to the short-chain dehydrogenases/reductases (SDR) family. FabI subfamily. In terms of assembly, homodimer. Homotetramer.

It carries out the reaction a 2,3-saturated acyl-[ACP] + NAD(+) = a (2E)-enoyl-[ACP] + NADH + H(+). The enzyme catalyses a 2,3-saturated acyl-CoA + NAD(+) = a (2E)-enoyl-CoA + NADH + H(+). It functions in the pathway lipid metabolism; mycolic acid biosynthesis. Its function is as follows. Enoyl-ACP reductase of the type II fatty acid syntase (FAS-II) system, which is involved in the biosynthesis of mycolic acids, a major component of mycobacterial cell walls. Catalyzes the NADH-dependent reduction of the double bond of 2-trans-enoyl-[acyl-carrier protein], an essential step in the fatty acid elongation cycle of the FAS-II pathway. Shows preference for long-chain fatty acyl thioester substrates, and can also use 2-trans-enoyl-CoAs as alternative substrates. The mycobacterial FAS-II system utilizes the products of the FAS-I system as primers to extend fatty acyl chain lengths up to C56, forming the meromycolate chain that serves as the precursor for final mycolic acids. This chain is Enoyl-[acyl-carrier-protein] reductase [NADH], found in Mycobacterium avium.